Here is a 785-residue protein sequence, read N- to C-terminus: LPS-assembly protein LptD (785 aa).

The signal sequence occupies residues 1–58 (MSCSCLCMSLYRGADRIGRFYTAHCPQDMALCMHRQKLNPLALALAAAFALNAPAALA).

It belongs to the LptD family. Component of the lipopolysaccharide transport and assembly complex. Interacts with LptE and LptA.

The protein localises to the cell outer membrane. In terms of biological role, together with LptE, is involved in the assembly of lipopolysaccharide (LPS) at the surface of the outer membrane. In Chromobacterium violaceum (strain ATCC 12472 / DSM 30191 / JCM 1249 / CCUG 213 / NBRC 12614 / NCIMB 9131 / NCTC 9757 / MK), this protein is LPS-assembly protein LptD.